Consider the following 382-residue polypeptide: uncharacterized protein (382 aa).

12 helical membrane passes run 14–34 (GLLL…LWLA), 45–65 (VVSS…GYVI), 79–99 (FIFA…SWLA), 102–122 (FVAG…LMCS), 131–151 (LLAA…LLVS), 157–177 (LMSV…PLLF), 204–224 (LGVN…GLMP), 235–255 (ASIG…QWPI), 270–290 (VQVF…AMAP), 291–311 (ALFI…AWAC), 325–345 (ALLL…AMLM), and 348–368 (FSDN…LLML).

It belongs to the major facilitator superfamily. YcaD (TC 2.A.1.26) family.

It localises to the cell inner membrane. This is an uncharacterized protein from Escherichia coli O7:K1 (strain IAI39 / ExPEC).